The sequence spans 504 residues: Probable ergothioneine transporter EgtUBC (504 aa).

One can recognise an ABC transmembrane type-1 domain in the interval 19-198 (LVQHIQISFV…LLAILFDFLL (180 aa)). Transmembrane regions (helical) follow at residues 25 to 44 (ISFV…GIYL), 57 to 74 (VAAI…GLLI), 81 to 97 (IVPA…LPIL), 146 to 170 (MVLI…LILL), 179 to 198 (LILL…DFLL), and 210 to 229 (IITI…VPYF). The interval 231 to 504 (SDKKEITIAG…DYLKDQGIIK (274 aa)) is ergothioneine binding domain.

The protein in the N-terminal section; belongs to the binding-protein-dependent transport system permease family. It in the C-terminal section; belongs to the OsmX family. In terms of assembly, the complex is probably composed of at least an ATP-binding protein (EgtUA) and a transmembrane protein (EgtUBC).

It is found in the membrane. Functionally, part of an ABC transporter complex EgtU required for the uptake of ergothioneine (EGT), a natural low-molecular weight (LMW) thiol antioxidant. Responsible for the translocation of the substrate across the membrane. Also contains a C-terminal periplasmic solute-binding domain (SBD) which binds to EGT with sub-micromolar affinity. Does not bind glycine betaine, carnitine, choline, proline, or cholate. Plays a role in bile acid tolerance. Dispensable for choline uptake. Probably not involved in betaine, carnitine or choline mediated osmo- or chill tolerance. Plays a role in enhancing virulence in mice. This chain is Probable ergothioneine transporter EgtUBC, found in Listeria monocytogenes serovar 1/2a (strain ATCC BAA-679 / EGD-e).